The primary structure comprises 420 residues: 3-isopropylmalate dehydratase large subunit (420 aa).

[4Fe-4S] cluster contacts are provided by Cys-300, Cys-360, and Cys-363.

It belongs to the aconitase/IPM isomerase family. LeuC type 2 subfamily. In terms of assembly, heterodimer of LeuC and LeuD. [4Fe-4S] cluster serves as cofactor.

It catalyses the reaction (2R,3S)-3-isopropylmalate = (2S)-2-isopropylmalate. The protein operates within amino-acid biosynthesis; L-leucine biosynthesis; L-leucine from 3-methyl-2-oxobutanoate: step 2/4. Functionally, catalyzes the isomerization between 2-isopropylmalate and 3-isopropylmalate, via the formation of 2-isopropylmaleate. This chain is 3-isopropylmalate dehydratase large subunit, found in Clostridium kluyveri (strain ATCC 8527 / DSM 555 / NBRC 12016 / NCIMB 10680 / K1).